A 372-amino-acid polypeptide reads, in one-letter code: NAD(P)H-quinone oxidoreductase subunit 1 (372 aa).

8 helical membrane passes run 27–47 (IIWL…GVLV), 97–117 (ILFT…WLIV), 128–148 (VGIG…GLLM), 176–196 (LALS…IDIV), 204–224 (ILSW…ICAL), 266–286 (ILSA…PIPV), 308–328 (SIGI…AILL), and 347–367 (FLLP…LALP).

Belongs to the complex I subunit 1 family. As to quaternary structure, NDH-1 is composed of at least 11 different subunits.

Its subcellular location is the cellular thylakoid membrane. The catalysed reaction is a plastoquinone + NADH + (n+1) H(+)(in) = a plastoquinol + NAD(+) + n H(+)(out). The enzyme catalyses a plastoquinone + NADPH + (n+1) H(+)(in) = a plastoquinol + NADP(+) + n H(+)(out). NDH-1 shuttles electrons from an unknown electron donor, via FMN and iron-sulfur (Fe-S) centers, to quinones in the respiratory and/or the photosynthetic chain. The immediate electron acceptor for the enzyme in this species is believed to be plastoquinone. Couples the redox reaction to proton translocation, and thus conserves the redox energy in a proton gradient. The polypeptide is NAD(P)H-quinone oxidoreductase subunit 1 (Prochlorococcus marinus (strain MIT 9515)).